The following is a 123-amino-acid chain: Altered inheritance of mitochondria protein 4 (123 aa).

Basic and acidic residues predominate over residues 1–16 (MDQKKDPSNNLTERRV). Residues 1-42 (MDQKKDPSNNLTERRVSKVQRPNKKKVRNQVESLSRNLERNK) are disordered. The segment covering 17 to 28 (SKVQRPNKKKVR) has biased composition (basic residues).

The protein belongs to the AIM4 family. As to quaternary structure, may interact with the nuclear pore complex.

It localises to the cytoplasm. This is Altered inheritance of mitochondria protein 4 (AIM4) from Saccharomyces cerevisiae (strain ATCC 204508 / S288c) (Baker's yeast).